A 1343-amino-acid polypeptide reads, in one-letter code: DNA-directed RNA polymerase subunit beta (1343 aa).

Belongs to the RNA polymerase beta chain family. In terms of assembly, the RNAP catalytic core consists of 2 alpha, 1 beta, 1 beta' and 1 omega subunit. When a sigma factor is associated with the core the holoenzyme is formed, which can initiate transcription.

It carries out the reaction RNA(n) + a ribonucleoside 5'-triphosphate = RNA(n+1) + diphosphate. DNA-dependent RNA polymerase catalyzes the transcription of DNA into RNA using the four ribonucleoside triphosphates as substrates. The sequence is that of DNA-directed RNA polymerase subunit beta from Haemophilus influenzae (strain 86-028NP).